The sequence spans 113 residues: Large ribosomal subunit protein bL20c (113 aa).

The protein belongs to the bacterial ribosomal protein bL20 family.

It localises to the plastid. The protein localises to the chloroplast. In terms of biological role, binds directly to 23S ribosomal RNA and is necessary for the in vitro assembly process of the 50S ribosomal subunit. It is not involved in the protein synthesizing functions of that subunit. In Nephroselmis olivacea (Green alga), this protein is Large ribosomal subunit protein bL20c.